The chain runs to 145 residues: Ponticulin-like protein B (145 aa).

An N-terminal signal peptide occupies residues 1 to 22 (MLFIKSLLLLLSLIFAVSNATG). N-linked (GlcNAc...) asparagine glycosylation occurs at Asn-34. The tract at residues 107–126 (DTTSSSTSPSSTSPSSTSPA) is disordered. The segment covering 108 to 126 (TTSSSTSPSSTSPSSTSPA) has biased composition (low complexity). A lipid anchor (GPI-like-anchor amidated serine) is attached at Ser-117. Residues 118–145 (TSPSSTSPASTLIGSIAFVTLAALFALI) constitute a propeptide, removed in mature form.

Belongs to the ponticulin family. Post-translationally, the GPI-like-anchor contains a phosphoceramide group, rather than a phosphatidyl group.

Its subcellular location is the cell membrane. Its function is as follows. Binds F-actin and nucleates actin assembly. The chain is Ponticulin-like protein B (ponB) from Dictyostelium discoideum (Social amoeba).